Reading from the N-terminus, the 535-residue chain is Expansin-like protein 9 (535 aa).

The signal sequence occupies residues 1-25 (MKINKNNYFKIIIFIIYVIINLINA). An N-linked (GlcNAc...) asparagine glycan is attached at N24. The Extracellular portion of the chain corresponds to 26 to 514 (SDNVKLSNCG…DNSSNILLFS (489 aa)). An Expansin-like EG45 domain is found at 31–144 (LSNCGQARAE…QEVSCGFLGN (114 aa)). Intrachain disulfides connect C34-C75 and C78-C139. N-linked (GlcNAc...) asparagine glycans are attached at residues N122, N257, and N292. The interval 459–487 (VDGSSNDDDGTGGTGGGASNKVGKRVDGE) is disordered. N-linked (GlcNAc...) asparagine glycosylation occurs at N506. A helical membrane pass occupies residues 515–535 (FNITLTFLLLSLIINILLLLF).

It belongs to the expansin family. Expansin A subfamily.

Its subcellular location is the membrane. In terms of biological role, may serve to lubricate the movement of the cellulose microfibrils during cell growth and wall extension and/or may serve to maintain the fluid state of the slug cell wall. This chain is Expansin-like protein 9 (expl9), found in Dictyostelium discoideum (Social amoeba).